The primary structure comprises 642 residues: Threonine--tRNA ligase (642 aa).

The TGS domain maps to M1–T61. The tract at residues D243–P534 is catalytic. 3 residues coordinate Zn(2+): C334, H385, and H511.

Belongs to the class-II aminoacyl-tRNA synthetase family. As to quaternary structure, homodimer. Requires Zn(2+) as cofactor.

It localises to the cytoplasm. The catalysed reaction is tRNA(Thr) + L-threonine + ATP = L-threonyl-tRNA(Thr) + AMP + diphosphate + H(+). In terms of biological role, catalyzes the attachment of threonine to tRNA(Thr) in a two-step reaction: L-threonine is first activated by ATP to form Thr-AMP and then transferred to the acceptor end of tRNA(Thr). Also edits incorrectly charged L-seryl-tRNA(Thr). The polypeptide is Threonine--tRNA ligase (Shewanella piezotolerans (strain WP3 / JCM 13877)).